The sequence spans 245 residues: Probable phosphatase YPTB2019 (245 aa).

Residues histidine 7, histidine 9, histidine 15, histidine 40, glutamate 73, histidine 101, histidine 131, aspartate 192, and histidine 194 each coordinate Zn(2+).

It belongs to the PHP family. In terms of assembly, homotrimer. It depends on Zn(2+) as a cofactor.

The protein is Probable phosphatase YPTB2019 of Yersinia pseudotuberculosis serotype I (strain IP32953).